The chain runs to 259 residues: MSKRTAFVMGASQGIGKAIALKLADQHFSLVINSRNLDNIESVKEDILAKHPEASVIVLAGDMSDQHTRAGIFQKIESQCGRLDVLINNIPGGAPDTFDNCNIEDMTATFTQKTVAYIDAIKRASSLMKQNEFGRIINIVGNLWKEPGANMFTNSMMNAALINASKNISIQLAPHNITVNCLNPGFIATDRYHQFVENVMKKNSISKQKAEEQIASGIPMKRVGSAEETAALAAFLASEEASYITGQQISADGGSMKSI.

NADP(+) contacts are provided by residues 12-15 (SQGI), 34-36 (SRN), 62-63 (DM), Ile-90, Lys-113, and 185-191 (GFIATDR).

Belongs to the short-chain dehydrogenases/reductases (SDR) family. In terms of assembly, homodimer.

Its subcellular location is the cytoplasm. It functions in the pathway antibiotic biosynthesis; bacilysin biosynthesis. Functionally, along with the bacABCDEF operon, BacG is involved in the biosynthesis of the nonribosomally synthesized dipeptide antibiotic bacilysin, composed of L-alanine and L-anticapsin. Bacilysin is an irreversible inactivator of the glutaminase domain of glucosamine synthetase. BacG catalyzes the stereoselective reduction of exocyclic-delta(3),delta(5)-dihydro-hydroxyphenylpyruvate (ex-H2HPP), adding a pro-S hydride equivalent to C4 position to yield tetrahydro-hydroxyphenylpyruvate (H4HPP). Although the 3Z,7R-ex-H2HPP isomer is kinetically disfavored by BacB and produced in a smaller quantity than 3E,7R-ex-H2HPP, it is the preferred substrate for the conjugate reduction reaction of BacG. In Bacillus subtilis (strain 168), this protein is NADPH-dependent reductase BacG.